The sequence spans 299 residues: Transcription termination/antitermination protein NusG (299 aa).

The interval 30–96 is disordered; sequence DPDEAELADA…APVEPAEPVD (67 aa). 2 repeat units span residues 46–49 and 70–73. Positions 46–87 are 4 X 4 AA repeats of E-E-A-A; sequence EEAALHVESDEDEDEADVEVDAAVEEAADDAEVAEEEAEEAA. The segment covering 54-87 has biased composition (acidic residues); sequence SDEDEDEADVEVDAAVEEAADDAEVAEEEAEEAA. One copy of the 3; approximate repeat lies at 80–83; that stretch reads EEEA. The stretch at 84–87 is repeat 4; it reads EEAA. Residues 248–276 form the KOW domain; that stretch reads VGDSVTVTDGPFATLQATINEINPDSKKV.

This sequence belongs to the NusG family. The N-terminus is blocked.

In terms of biological role, participates in transcription elongation, termination and antitermination. The polypeptide is Transcription termination/antitermination protein NusG (Streptomyces virginiae (Streptomyces cinnamonensis)).